We begin with the raw amino-acid sequence, 217 residues long: Zinc finger CCHC-type and RNA-binding motif-containing protein 1 (217 aa).

The RRM domain occupies 10-88; the sequence is STVYVSNLPF…RVIKASIAID (79 aa). The segment at 105 to 122 adopts a CCHC-type zinc-finger fold; sequence SKCYECGESGHLSYACPK. A disordered region spans residues 120 to 217; that stretch reads CPKNMLGERE…YFSDEEELSD (98 aa). The segment covering 145 to 163 has biased composition (acidic residues); it reads PEEEIEEVEVSEEEGEDPA. Phosphoserine occurs at positions 155, 210, and 216.

As to quaternary structure, component of the U11/U12 snRNPs that are part of the U12-type spliceosome. Interacts with ZRSR1. As to expression, expressed at higher level in heart and testis, and at lower level in cerebellum. Weakly expressed at low level in liver.

The protein resides in the nucleus. It is found in the nucleoplasm. This Mus musculus (Mouse) protein is Zinc finger CCHC-type and RNA-binding motif-containing protein 1 (Zcrb1).